The sequence spans 889 residues: Phosphatidylinositol 3-kinase VPS34 (889 aa).

The C2 PI3K-type domain occupies 34–184 (ASEKLIDPQL…EWIDELVLKK (151 aa)). In terms of domain architecture, PIK helical spans 298–540 (SDKHVKPDAK…ESFLSRLNSN (243 aa)). In terms of domain architecture, PI3K/PI4K catalytic spans 607 to 873 (MIDQCNVFKS…LINDSVNALL (267 aa)). A G-loop region spans residues 613-619 (VFKSSLS). A catalytic loop region spans residues 742–750 (GVGDRHLDN). An activation loop region spans residues 761–782 (HADFGYILGQDPKPFPPLMKLP).

Belongs to the PI3/PI4-kinase family. Type III PI4K subfamily. In terms of assembly, component of the autophagy-specific VPS34 PI3-kinase complex I composed of VPS15, VPS30, VPS34, ATG14 and ATG38; and of the VPS34 PI3-kinase complex II composed of VPS15, VPS30, VPS34 and VPS38. Post-translationally, autophosphorylated.

The protein resides in the golgi apparatus. Its subcellular location is the trans-Golgi network membrane. The protein localises to the endosome membrane. It carries out the reaction a 1,2-diacyl-sn-glycero-3-phospho-(1D-myo-inositol) + ATP = a 1,2-diacyl-sn-glycero-3-phospho-(1D-myo-inositol-3-phosphate) + ADP + H(+). In terms of biological role, multifunctional phosphatidylinositol 3-kinase that plays a role in signaling in modulation of host immune response, intracellular survival and virulence. Catalytic subunit of the autophagy-specific VPS34 PI3-kinase complex I essential to recruit the ATG8-phosphatidylinositol conjugate and the ATG12-ATG5 conjugate to the pre-autophagosomal structure. Also involved in endosome-to-Golgi retrograde transport as part of the VPS34 PI3-kinase complex II. This second complex is required for the endosome-to-Golgi retrieval of PEP1 and KEX2, and the recruitment of VPS5 and VPS7, two components of the retromer complex, to endosomal membranes (probably through the synthesis of a specific pool of phosphatidylinositol 3-phosphate recruiting the retromer to the endosomes). Finally, it might also be involved in ethanol tolerance and cell wall integrity. This chain is Phosphatidylinositol 3-kinase VPS34, found in Candida glabrata (strain ATCC 2001 / BCRC 20586 / JCM 3761 / NBRC 0622 / NRRL Y-65 / CBS 138) (Yeast).